The following is a 356-amino-acid chain: Epoxide hydrolase B (356 aa).

An AB hydrolase-1 domain is found at 28–129 (PLVVLLHGFP…RCAGVVGISV (102 aa)). The active-site Nucleophile is the Asp-104. His-333 serves as the catalytic Proton acceptor.

Belongs to the AB hydrolase superfamily. Epoxide hydrolase family. In terms of assembly, homodimer.

The enzyme catalyses an epoxide + H2O = an ethanediol. Could be involved in detoxification of extraneous host-cell epoxides. Catalyzes the hydrolysis of small aromatic epoxide-containing substrates such as trans-1,3-diphenylpropene oxide, trans and cis-stilbene oxide, and terpenoid epoxide. This chain is Epoxide hydrolase B, found in Mycobacterium tuberculosis (strain CDC 1551 / Oshkosh).